The following is a 347-amino-acid chain: MSKKIKVGIVGATGYTGVELLRLLAAHPDVEVAAVTSRSEAGTAVADYFPSLRGVYGLAFQTPDEAGLEQCDIVFFATPNGIAMKDAPRLIEQGVRVIDLSADFRIRDIPTWEHWYGMTHAAPDLVSQAVYGLSELNREAVAQARLVANPGCYPTCVSLPLVPLLRQCRLKPGMPLIADCKSGVSGAGRKGNVGSLLCEVGDNFKAYGIAGHRHLPEIRQTIAGLQDGIAEGFVFTPHLAPMIRGMHATVYLHLSDGICPETILRDYYRDSLFVDILPAGSTPETRSVRGANLCRISIQQAAQSDVWVVLSVIDNLVKGAAGQAVQNMNIMFGLKETHGLGAIPLLP.

Cysteine 152 is a catalytic residue.

It belongs to the NAGSA dehydrogenase family. Type 1 subfamily.

Its subcellular location is the cytoplasm. It carries out the reaction N-acetyl-L-glutamate 5-semialdehyde + phosphate + NADP(+) = N-acetyl-L-glutamyl 5-phosphate + NADPH + H(+). The protein operates within amino-acid biosynthesis; L-arginine biosynthesis; N(2)-acetyl-L-ornithine from L-glutamate: step 3/4. Its function is as follows. Catalyzes the NADPH-dependent reduction of N-acetyl-5-glutamyl phosphate to yield N-acetyl-L-glutamate 5-semialdehyde. This chain is N-acetyl-gamma-glutamyl-phosphate reductase, found in Neisseria meningitidis serogroup A / serotype 4A (strain DSM 15465 / Z2491).